Here is a 166-residue protein sequence, read N- to C-terminus: Spiderine-1a (166 aa).

A signal peptide spans 1–18; sequence MKFALVLLGVCAFYLVNA. A propeptide spanning residues 19-58 is cleaved from the precursor; that stretch reads TGDLETELEASELQELQEALDLIGETPLESLEAEELEEAR. Residues 59–99 are linear cationic cytotoxin domain; sequence KFKWGKLFSTAKKLYKKGKKLSKNKNFKKALKFGKQLAKNL. The region spanning 113–166 is the Oxytoxin-type inhibitor cystine knot (ICK) domain; it reads NNKCWAIGTTCSDDCDCCPEHHCHCPAGKWLPGLFRCTCQVTESDKVNKCPPAE. 5 cysteine pairs are disulfide-bonded: Cys116/Cys130, Cys123/Cys135, Cys127/Cys162, Cys129/Cys151, and Cys137/Cys149.

Belongs to the spiderine family. Cationic/spiderine subfamily. In terms of tissue distribution, expressed by the venom gland.

The protein resides in the secreted. Its function is as follows. Has antimicrobial, insecticidal, cytolytic and cytotoxic activity. Active against E.coli DH5alpha, E.faecalis VKM B 871, B.subtilis VKM B 501, A.globiformis VKM Ac 1112, P.aeruginosa PAO1 and S.aureus 209P in submicromolar or low micromolar ranges. Lyses human erythrocytes. Kills HeLA and A549 cells. This is Spiderine-1a from Oxyopes takobius (Lynx spider).